Consider the following 719-residue polypeptide: Polyribonucleotide nucleotidyltransferase (719 aa).

Positions 507 and 513 each coordinate Mg(2+). A KH domain is found at 573–633 (PKLELFSVDP…EQIKAAKDYI (61 aa)). An S1 motif domain is found at 658–719 (GQEFQGIVKK…NGKISVDLCE (62 aa)).

This sequence belongs to the polyribonucleotide nucleotidyltransferase family. It depends on Mg(2+) as a cofactor.

Its subcellular location is the cytoplasm. The catalysed reaction is RNA(n+1) + phosphate = RNA(n) + a ribonucleoside 5'-diphosphate. Involved in mRNA degradation. Catalyzes the phosphorolysis of single-stranded polyribonucleotides processively in the 3'- to 5'-direction. The sequence is that of Polyribonucleotide nucleotidyltransferase from Campylobacter jejuni subsp. jejuni serotype O:23/36 (strain 81-176).